The following is a 66-amino-acid chain: MAKGKDVRVTIFLECTSCVRNDIKKEFAGISRYITQKNRHNTPSRLELRKFCPYCYKHTIHGEIKK.

Belongs to the bacterial ribosomal protein bL33 family.

Its subcellular location is the plastid. The protein resides in the chloroplast. This is Large ribosomal subunit protein bL33c from Aethionema cordifolium (Lebanon stonecress).